Here is a 98-residue protein sequence, read N- to C-terminus: Large ribosomal subunit protein eL30 (98 aa).

Belongs to the eukaryotic ribosomal protein eL30 family.

The chain is Large ribosomal subunit protein eL30 from Methanosphaera stadtmanae (strain ATCC 43021 / DSM 3091 / JCM 11832 / MCB-3).